The primary structure comprises 382 residues: Alcohol dehydrogenase 4 (382 aa).

This sequence belongs to the iron-containing alcohol dehydrogenase family. In terms of assembly, homodimer. Requires Zn(2+) as cofactor. It depends on Fe(2+) as a cofactor.

It is found in the mitochondrion. It carries out the reaction a primary alcohol + NAD(+) = an aldehyde + NADH + H(+). It catalyses the reaction a secondary alcohol + NAD(+) = a ketone + NADH + H(+). Inhibited by EDTA. Reduces acetaldehyde to ethanol during glucose fermentation. Specific for ethanol. Shows drastically reduced activity towards primary alcohols from 4 carbon atoms upward. Isomers of aliphatic alcohol, as well as secondary alcohols and glycerol are not used at all. The polypeptide is Alcohol dehydrogenase 4 (ADH4) (Saccharomyces cerevisiae (strain YJM789) (Baker's yeast)).